Consider the following 432-residue polypeptide: MRVVILGSGVVGVTSAWYLSQAGHDVTVIDRESGPAQETSAANAGQISPGYAAPWAAPGVPLKAIKWMFQRHAPLAVRLDGTPFQLKWMWQMLRNCDTRHYMENKGRMVRLAEYSRDCLKTLRAVTGIEYEGCQGGTLQLFRTAQQYENATRDIAVLEDAGVPYQLLEASRLAEVEPALAEVAHKLTGGLRLPNDETGDCQLFTQRLARMAEQAGVTFRFNTPVEKLLYENDQIYGVKCADEIIKADAYVMAFGSYSTAMLKGIVDIPVYPLKGYSLTIPIVEPDGAPVSTILDETYKIAITRFDKRIRVGGMAEIVGFNTDLLQPRRETLEMVVRDLFPRGGHIEQATFWTGLRPMTPDGTPVVGRTRYKNLWLNTGHGTLGWTMACGSGQLLSDILSGRTPAIPYDDLSVARYRSDFTPTRPQRLHSAHN.

FAD is bound at residue 3 to 17 (VVILGSGVVGVTSAW).

The protein belongs to the DadA oxidoreductase family. The cofactor is FAD.

It carries out the reaction a D-alpha-amino acid + A + H2O = a 2-oxocarboxylate + AH2 + NH4(+). It participates in amino-acid degradation; D-alanine degradation; NH(3) and pyruvate from D-alanine: step 1/1. Oxidative deamination of D-amino acids. The chain is D-amino acid dehydrogenase from Salmonella choleraesuis (strain SC-B67).